Here is a 334-residue protein sequence, read N- to C-terminus: UDP-N-acetylglucosamine--N-acetylmuramyl-(pentapeptide) pyrophosphoryl-undecaprenol N-acetylglucosamine transferase (334 aa).

Residues 11–13 (TGG), N125, S185, I229, and Q274 contribute to the UDP-N-acetyl-alpha-D-glucosamine site.

This sequence belongs to the glycosyltransferase 28 family. MurG subfamily.

It localises to the cell inner membrane. The enzyme catalyses di-trans,octa-cis-undecaprenyl diphospho-N-acetyl-alpha-D-muramoyl-L-alanyl-D-glutamyl-meso-2,6-diaminopimeloyl-D-alanyl-D-alanine + UDP-N-acetyl-alpha-D-glucosamine = di-trans,octa-cis-undecaprenyl diphospho-[N-acetyl-alpha-D-glucosaminyl-(1-&gt;4)]-N-acetyl-alpha-D-muramoyl-L-alanyl-D-glutamyl-meso-2,6-diaminopimeloyl-D-alanyl-D-alanine + UDP + H(+). It participates in cell wall biogenesis; peptidoglycan biosynthesis. Its function is as follows. Cell wall formation. Catalyzes the transfer of a GlcNAc subunit on undecaprenyl-pyrophosphoryl-MurNAc-pentapeptide (lipid intermediate I) to form undecaprenyl-pyrophosphoryl-MurNAc-(pentapeptide)GlcNAc (lipid intermediate II). In Thermosipho africanus (strain TCF52B), this protein is UDP-N-acetylglucosamine--N-acetylmuramyl-(pentapeptide) pyrophosphoryl-undecaprenol N-acetylglucosamine transferase.